The sequence spans 170 residues: MPRSRINGNFIDKTFSIVANILLQIIPTTSGEKRAFTYYRDGMLAQSEGNYAEALQNYYEAMRLEIDPYDRSYILYNIGLIHTSNGEHTKALEYYFRALERNPFLPQAFNNMAVICHYRGEQAILQGDSEIAEAWFDQAAEYWKQAIALTPGNYIEAQNWLKITKRFEFE.

3 TPR repeats span residues 35–68 (AFTY…EIDP), 72–105 (SYIL…NPFL), and 120–153 (GEQA…TPGN).

This sequence belongs to the Ycf3 family.

It localises to the plastid. It is found in the chloroplast thylakoid membrane. In terms of biological role, essential for the assembly of the photosystem I (PSI) complex. May act as a chaperone-like factor to guide the assembly of the PSI subunits. The sequence is that of Photosystem I assembly protein Ycf3 from Zea mays (Maize).